Consider the following 421-residue polypeptide: Protein HOMOLOG OF MAMMALIAN LYST-INTERACTING PROTEIN 5 (421 aa).

Position 2 is an N-acetylserine (S2). Residues 146–374 (IKEGRKPTPG…KYHYDSSYQP (229 aa)) form a disordered region. The segment covering 165 to 185 (SIPSSGPSGSYDHSASDTNTT) has biased composition (polar residues). The segment covering 188–207 (HRTELDPPHDSNDDSSHHQF) has biased composition (basic and acidic residues). Residues 245 to 258 (LPPPTGPSDSPYPH) show a composition bias toward pro residues. Residues 278–293 (NYSSHEPSPNSLPNFQ) are compositionally biased toward polar residues. Low complexity-rich tracts occupy residues 294–308 (SYPS…STSP) and 317–337 (PEPY…SFSS).

This sequence belongs to the VTA1 family. In terms of assembly, homodimer. Interacts with SKD1/VPS4, VPS60-1, CHMP1A and CHMP1B. Binds to PROS/At4g24370. Interacts with MPK6 and MPK3. In terms of processing, phosphorylated by activated MPK6 and MPK3, this activation is required to trigger multivesicular bodies (MVBs) trafficking upon plant infection.

The protein resides in the cytoplasm. Its subcellular location is the endosome membrane. It is found in the nucleus. The protein localises to the endosome. It localises to the multivesicular body. Involved in the endosomal multivesicular bodies (MVB) pathway. MVBs contain intraluminal vesicles (ILVs) that are generated by invagination and scission from the limiting membrane of the endosome and are delivered to lysosomes enabling degradation of membrane proteins. Thought to be a cofactor of SKD1/VPS4, which catalyzes the disassembly of membrane-associated ESCRT-III. Target of pathogen-responsive mitogen-activated protein kinases (MPKs) that plays a critical role in plant basal resistance to Pseudomonas syringae in a SKD1-dependent manner by promoting multivesicular bodies (MVBs) trafficking upon plant infection. This is Protein HOMOLOG OF MAMMALIAN LYST-INTERACTING PROTEIN 5 from Arabidopsis thaliana (Mouse-ear cress).